The chain runs to 383 residues: Acetylornithine deacetylase (383 aa).

A Zn(2+)-binding site is contributed by His-80. The active site involves Asp-82. Asp-112 is a binding site for Zn(2+). Glu-144 is a catalytic residue. 3 residues coordinate Zn(2+): Glu-145, Glu-169, and His-355.

Belongs to the peptidase M20A family. ArgE subfamily. Homodimer. Zn(2+) serves as cofactor. Requires Co(2+) as cofactor. The cofactor is glutathione.

The protein localises to the cytoplasm. It catalyses the reaction N(2)-acetyl-L-ornithine + H2O = L-ornithine + acetate. The protein operates within amino-acid biosynthesis; L-arginine biosynthesis; L-ornithine from N(2)-acetyl-L-ornithine (linear): step 1/1. In terms of biological role, catalyzes the hydrolysis of the amide bond of N(2)-acetylated L-amino acids. Cleaves the acetyl group from N-acetyl-L-ornithine to form L-ornithine, an intermediate in L-arginine biosynthesis pathway, and a branchpoint in the synthesis of polyamines. In Shigella sonnei (strain Ss046), this protein is Acetylornithine deacetylase.